A 211-amino-acid polypeptide reads, in one-letter code: MNRKKLQKLTDTLTKNCKHFNKFEVNCLIKLFYDLVGGVERQGLVVGLDRNAFRNILHVTFGMTDDMIMDRVFRGFDKDNDGCVNVLEWIHGLSLFLRGSLEEKMKYCFEVFDLNGDGFISKEEMFHMLKNSLLKQPSEEDPDEGIKDLVEITLKKMDHDHDGKLSFADYELAVREETLLLEAFGPCLPDPKSQMEFEAQVFKDPNEFNDM.

EF-hand domains are found at residues 64-99 (TDDM…FLRG), 100-135 (SLEE…SLLK), and 145-180 (GIKD…ETLL). Ca(2+) contacts are provided by Asp77, Asp79, Asp81, Cys83, Glu88, Asp113, Asn115, Asp117, Glu124, Asp158, Asp160, Asp162, Lys164, and Asp169.

In terms of assembly, component of the outer dynein arm-docking complex along with ODAD1, ODAD2, ODAD3 and ODAD4. Strong expression in the respiratory epithelium. Expressed in the sperm.

The protein resides in the cytoplasm. It localises to the cytoskeleton. Its subcellular location is the cilium axoneme. The protein localises to the cell projection. It is found in the cilium. The protein resides in the flagellum. In terms of biological role, component of the outer dynein arm-docking complex (ODA-DC) that mediates outer dynein arms (ODA) binding onto the doublet microtubule. Seems to regulate the assembly of both ODAs and their axonemal docking complex onto ciliary microtubules. Regulates ciliary and flagellar motility and is required for cilia-driven determination of body laterality. The chain is Calaxin from Homo sapiens (Human).